A 97-amino-acid polypeptide reads, in one-letter code: Large ribosomal subunit protein bL21 (97 aa).

Belongs to the bacterial ribosomal protein bL21 family. In terms of assembly, part of the 50S ribosomal subunit. Contacts protein L20.

In terms of biological role, this protein binds to 23S rRNA in the presence of protein L20. In Persephonella marina (strain DSM 14350 / EX-H1), this protein is Large ribosomal subunit protein bL21.